We begin with the raw amino-acid sequence, 315 residues long: ATP synthase gamma chain (315 aa).

This sequence belongs to the ATPase gamma chain family. As to quaternary structure, F-type ATPases have 2 components, CF(1) - the catalytic core - and CF(0) - the membrane proton channel. CF(1) has five subunits: alpha(3), beta(3), gamma(1), delta(1), epsilon(1). CF(0) has three main subunits: a, b and c.

Its subcellular location is the cellular thylakoid membrane. Produces ATP from ADP in the presence of a proton gradient across the membrane. The gamma chain is believed to be important in regulating ATPase activity and the flow of protons through the CF(0) complex. The protein is ATP synthase gamma chain of Synechococcus sp. (strain RCC307).